Here is a 157-residue protein sequence, read N- to C-terminus: Crossover junction endodeoxyribonuclease RuvC (157 aa).

Catalysis depends on residues aspartate 7, glutamate 66, and aspartate 139. Mg(2+) is bound by residues aspartate 7, glutamate 66, and aspartate 139.

Belongs to the RuvC family. As to quaternary structure, homodimer which binds Holliday junction (HJ) DNA. The HJ becomes 2-fold symmetrical on binding to RuvC with unstacked arms; it has a different conformation from HJ DNA in complex with RuvA. In the full resolvosome a probable DNA-RuvA(4)-RuvB(12)-RuvC(2) complex forms which resolves the HJ. It depends on Mg(2+) as a cofactor.

Its subcellular location is the cytoplasm. It carries out the reaction Endonucleolytic cleavage at a junction such as a reciprocal single-stranded crossover between two homologous DNA duplexes (Holliday junction).. Functionally, the RuvA-RuvB-RuvC complex processes Holliday junction (HJ) DNA during genetic recombination and DNA repair. Endonuclease that resolves HJ intermediates. Cleaves cruciform DNA by making single-stranded nicks across the HJ at symmetrical positions within the homologous arms, yielding a 5'-phosphate and a 3'-hydroxyl group; requires a central core of homology in the junction. The consensus cleavage sequence is 5'-(A/T)TT(C/G)-3'. Cleavage occurs on the 3'-side of the TT dinucleotide at the point of strand exchange. HJ branch migration catalyzed by RuvA-RuvB allows RuvC to scan DNA until it finds its consensus sequence, where it cleaves and resolves the cruciform DNA. The polypeptide is Crossover junction endodeoxyribonuclease RuvC (Helicobacter pylori (strain J99 / ATCC 700824) (Campylobacter pylori J99)).